The primary structure comprises 1031 residues: MNRTHMPNNHKIHEGINMKSSINEVKKSKRIEKELSYVTNSTKKKSKKKQTNIKKIGDVSVNIENINIPNNLNLYTDNESVVSSKYKKKKKKKKKLNIYNNNDNSKYLKPQVVKKKNSKIIFLHHNENNTSTHSGESSKFQKLKKKKKIKKGTKKKSINKISILKHKSHESFPSTQNENTPELEPKQVNLSPLEIEINKTNDIDKHGLEINKTPSTQNFNDPINNLDNNEKIKDRGLFHGIDNIYENYITNDKENMQSVIKNRHYIIDKNEQNEQAYNNDMNITNFIKNGNTNKNSNNDKSANSNDYNKNLFCELTEAIENDGIEQTCNRNINIRLKEEKEAEEEERKKNEDEHILENGKSNNEDNSFDKKDDLTNLGKSFKNNESFELNSPQKNIRKGSLDGMRKKKISEKKMKTKIKQKKKRQNNINDTTIGKKKIYIKENNNERKSSGLILGFKKMKKKLSGKRIDQKKEYKEKEIYSDKLKDVIKDKKKYKKKDIDDISFTKDIVKENVKGVDRDDDEKKRKTIGQDEEKEKIEIIIVKKNETGTEEEIKVETDENPKVKTKEKCKIENGEGCKIAIDEENSVFVEAENMKNEAKLEADVIIIEDAELRKDEEEDKSKNNEKDSKSEERDILETQMAGKEEKPVLKKKKKNKGKQRNREGKGVVEKGYDAKREKKENEEKNKANTKMEPNDSIEQKDKLSNVQNMSNIVKNNKVNKILEKYIISKKEENLKRKYMNTKKFMDILDISEKKFKIDTINFFPHTIGQVCYSDIYFFFDTYEKELKKSNTGKNTIKLMKKLFKCEYIEMNNMELILQIFDKIIDKLKKELKTESIVKIYDEEEHVIASKIMKYKNGNYDKYMYNKKKYDSNNEYSISENNLFNQNPLHHQNNLFGCNRNKLYNIIFNSSQGEYIMGSHSFLILQQWNDEYKLAMLRDKLEQIKKRKQNMNDPIAKYIKSLKYGFIDSLFSICCLYDCKKNDNDASYCDFPLPSQNTFYTNTQIHLDNMNLNSERILPMKITKAVQILASS.

Disordered regions lie at residues 125–184 (HNEN…PELE), 340–405 (KEAE…DGMR), and 609–697 (DAEL…NDSI). A compositionally biased stretch (basic residues) spans 141–168 (QKLKKKKKIKKGTKKKSINKISILKHKS). Over residues 171–180 (SFPSTQNENT) the composition is skewed to polar residues. Residues 340-357 (KEAEEEERKKNEDEHILE) show a composition bias toward basic and acidic residues. The span at 377–394 (LGKSFKNNESFELNSPQK) shows a compositional bias: polar residues. The stretch at 581-646 (IDEENSVFVE…ETQMAGKEEK (66 aa)) forms a coiled coil. Residues 610–648 (AELRKDEEEDKSKNNEKDSKSEERDILETQMAGKEEKPV) show a composition bias toward basic and acidic residues. Basic residues predominate over residues 649 to 659 (LKKKKKNKGKQ). Residues 660-686 (RNREGKGVVEKGYDAKREKKENEEKNK) show a composition bias toward basic and acidic residues.

Its function is as follows. In the mosquito vector midgut, plays a role in ookinete development. The chain is Ookinete maturation protein 1 from Plasmodium berghei (strain Anka).